The following is an 884-amino-acid chain: Translation initiation factor IF-2 (884 aa).

Basic and acidic residues-rich tracts occupy residues 110–153 (AKAK…KEKA) and 193–234 (KQKE…DHHV). The tract at residues 110 to 291 (AKAKAEADAK…NRSTAPQSMA (182 aa)) is disordered. Positions 255–268 (GRRARNKPTNKKRG) are enriched in basic residues. The tr-type G domain occupies 384–553 (TRAPVVTIMG…LLQSEVLELK (170 aa)). Residues 393–400 (GHVDHGKT) are G1. A GTP-binding site is contributed by 393–400 (GHVDHGKT). Residues 418–422 (GITQH) form a G2 region. The G3 stretch occupies residues 439–442 (DTPG). Residues 439 to 443 (DTPGH) and 493 to 496 (NKMD) contribute to the GTP site. A G4 region spans residues 493 to 496 (NKMD). The tract at residues 529–531 (SAK) is G5.

The protein belongs to the TRAFAC class translation factor GTPase superfamily. Classic translation factor GTPase family. IF-2 subfamily.

It is found in the cytoplasm. Functionally, one of the essential components for the initiation of protein synthesis. Protects formylmethionyl-tRNA from spontaneous hydrolysis and promotes its binding to the 30S ribosomal subunits. Also involved in the hydrolysis of GTP during the formation of the 70S ribosomal complex. The protein is Translation initiation factor IF-2 of Shewanella denitrificans (strain OS217 / ATCC BAA-1090 / DSM 15013).